The sequence spans 250 residues: Uracil-DNA glycosylase (250 aa).

Catalysis depends on D91, which acts as the Proton acceptor.

Belongs to the uracil-DNA glycosylase (UDG) superfamily. UNG family.

It is found in the host nucleus. The enzyme catalyses Hydrolyzes single-stranded DNA or mismatched double-stranded DNA and polynucleotides, releasing free uracil.. Functionally, excises uracil residues from the DNA which can arise as a result of misincorporation of dUMP residues by DNA polymerase or due to deamination of cytosine. In terms of biological role, excises uracil residues from the DNA which can arise as a result of misincorporation of dUMP residues by DNA polymerase or deamination of cytosines. Therefore may reduce deleterious uracil incorporation into the viral genome, particularly in terminally differentiated cells which lack DNA repair enzymes. The polypeptide is Uracil-DNA glycosylase (UL114) (Homo sapiens (Human)).